The primary structure comprises 369 residues: Anhydro-N-acetylmuramic acid kinase (369 aa).

Residue 12-19 (GTSLDGVD) participates in ATP binding.

It belongs to the anhydro-N-acetylmuramic acid kinase family.

The catalysed reaction is 1,6-anhydro-N-acetyl-beta-muramate + ATP + H2O = N-acetyl-D-muramate 6-phosphate + ADP + H(+). It functions in the pathway amino-sugar metabolism; 1,6-anhydro-N-acetylmuramate degradation. Its pathway is cell wall biogenesis; peptidoglycan recycling. Its function is as follows. Catalyzes the specific phosphorylation of 1,6-anhydro-N-acetylmuramic acid (anhMurNAc) with the simultaneous cleavage of the 1,6-anhydro ring, generating MurNAc-6-P. Is required for the utilization of anhMurNAc either imported from the medium or derived from its own cell wall murein, and thus plays a role in cell wall recycling. This Escherichia coli (strain SMS-3-5 / SECEC) protein is Anhydro-N-acetylmuramic acid kinase.